Here is a 599-residue protein sequence, read N- to C-terminus: Omega-hydroxyceramide transacylase (599 aa).

The PNPLA domain maps to 16 to 185 (ISFSGSGFLS…TSMQPCSFWT (170 aa)). The short motif at 51 to 55 (GTSAG) is the GXSXG element. Ser-53 serves as the catalytic Nucleophile. Asp-172 (proton acceptor) is an active-site residue. Residues 172-174 (DGG) carry the DGA/G motif. The segment at 289-563 (PPPPSLQNLP…PASKLKSAPC (275 aa)) is disordered. Polar residues-rich tracts occupy residues 325-335 (SSAAPSVQTPE) and 350-362 (VSISKQPSVSPLS). Over residues 443–454 (SPESPRLLLRSS) the composition is skewed to low complexity. Residues 468 to 478 (PLSPSTPPAGP) show a composition bias toward pro residues. Residues 490–501 (ATGSPALSQLTG) show a composition bias toward polar residues. The span at 551-563 (SKKPASKLKSAPC) shows a compositional bias: low complexity.

As to expression, specifically expressed in skin by keratinocytes, at the boundary area between the nucleated stratum granulosum and the denucleated stratum corneum in the epidermis (at protein level). Also expressed in stomach and other surface lining tissues like intestine and tongue. Also detected in testis as well as in other tissues but at very low level.

The protein localises to the cytoplasm. It catalyses the reaction an N-(omega-hydroxy-ultra-long chain fatty acyl)-sphingoid base + a (9Z,12Z)-octadecadienoyl-containing triacyl-sn-glycerol = an N-[omega-(9Z,12Z-octadecadienoyloxy)-O-ultra-long chain fatty acyl]-sphingoid base + a diacylglycerol. It carries out the reaction an N-(omega-hydroxy-ultra-long chain fatty acyl)-sphing-4-enine + a (9Z,12Z)-octadecadienoyl-containing triacyl-sn-glycerol = an N-(omega-(9Z,12Z-octadecadienoyloxy)-ultra-long chain fatty acyl)-sphing-4-enine + a diacylglycerol. The enzyme catalyses N-(28-hydroxyoctacosanoyl)-sphing-4-enine + a (9Z,12Z)-octadecadienoyl-containing triacyl-sn-glycerol = N-(28-(9Z,12Z-octadecadienoyloxy)-octacosanoyl)-sphing-4-enine + a diacylglycerol. The catalysed reaction is N-(30-hydroxytriacontanoyl)-sphing-4-enine + 1,2,3-tri-(9Z,12Z)-octadecadienoylglycerol = N-[30-(9Z,12Z-octadecadienoyloxy)-triacontanoyl]-sphing-4-enine + di-(9Z,12Z)-octadecadienoylglycerol. It catalyses the reaction N-(32-hydroxydotriacontanoyl)-sphing-4-enine + a (9Z,12Z)-octadecadienoyl-containing triacyl-sn-glycerol = N-(32-(9Z,12Z-octadecadienoyloxy)-dotricontanoyl)-sphing-4-enine + a diacylglycerol. It carries out the reaction N-(32-hydroxydotriacontenoyl)-sphing-4-enine + a (9Z,12Z)-octadecadienoyl-containing triacyl-sn-glycerol = an N-(32-(9Z,12Z-octadecadienoyloxy)-dotriacontenoyl)-sphing-4-enine + a diacylglycerol. The enzyme catalyses an N-(34-hydroxytetratriacontenoyl)-sphing-4-enine + a (9Z,12Z)-octadecadienoyl-containing triacyl-sn-glycerol = an N-(34-(9Z,12Z-octadecadienoyloxy)-tetratriacontenoyl)-sphing-4-enine + a diacylglycerol. The catalysed reaction is an N-(34-hydroxytetratriacontadienoyl)-sphing-4-enine + a (9Z,12Z)-octadecadienoyl-containing triacyl-sn-glycerol = an N-(34-(9Z,12Z-octadecadienoyloxy)-tetratriacontadienoyl)-sphing-4-enine + a diacylglycerol. It catalyses the reaction an N-(36-hydroxyhexatriacontenoyl)-sphing-4-enine + a (9Z,12Z)-octadecadienoyl-containing triacyl-sn-glycerol = an N-(36-(9Z,12Z-octadecadienoyloxy)-hexatriacontenoyl)-sphing-4-enine + a diacylglycerol. It carries out the reaction an N-(36-hydroxyhexatriacontadienoyl)-sphing-4-enine + a (9Z,12Z)-octadecadienoyl-containing triacyl-sn-glycerol = an N-(36-(9Z,12Z-octadecadienoyloxy)-hexatriacontadienoyl)-sphing-4-enine + a diacylglycerol. The enzyme catalyses an N-(38-hydroxyoctatriacontenoyl)-sphing-4-enine + a (9Z,12Z)-octadecadienoyl-containing triacyl-sn-glycerol = an N-(38-(9Z,12Z-octadecadienoyloxy)-octatriacontenoyl)-sphing-4-enine + a diacylglycerol. Functionally, omega-hydroxyceramide transacylase involved in the synthesis of omega-O-acylceramides (esterified omega-hydroxyacyl-sphingosine; EOS), which are extremely hydrophobic lipids involved in skin barrier formation. Catalyzes the last step of the synthesis of omega-O-acylceramides by transferring linoleic acid from triglycerides to an omega-hydroxyceramide. Omega-O-acylceramides, are required for the biogenesis of lipid lamellae in the stratum corneum and the formation of the cornified lipid envelope which are essential for the epidermis barrier function. These lipids also play a role in keratinocyte differentiation. May also act on omega-hydroxylated ultra-long chain fatty acids (omega-OH ULCFA) and acylglucosylceramides (GlcEOS). This Mus musculus (Mouse) protein is Omega-hydroxyceramide transacylase.